Consider the following 481-residue polypeptide: Beta-1,3-glucan-binding protein (481 aa).

The first 17 residues, Met-1–Gly-17, serve as a signal peptide directing secretion. Residues Phe-19–Asp-123 enclose the CBM39 domain. The 271-residue stretch at His-211 to Leu-481 folds into the GH16 domain. N-linked (GlcNAc...) asparagine glycosylation is present at Asn-467.

This sequence belongs to the insect beta-1,3-glucan binding protein family. In terms of processing, the N-terminus is blocked. Hemolymph.

It localises to the secreted. Its function is as follows. Involved in the recognition of invading microorganisms. Binds specifically to beta-1,3-glucan and activates the phenoloxidase cascade. The protein is Beta-1,3-glucan-binding protein (GRP) of Tenebrio molitor (Yellow mealworm beetle).